The sequence spans 320 residues: Sucrose operon repressor (320 aa).

The 55-residue stretch at 1 to 55 folds into the HTH lacI-type domain; that stretch reads MKNIADIAKIAGVSKSTVSRYLNNGSVSLKTQQKLDEIIRENDYQPNQFAQSLRA. The segment at residues 4–23 is a DNA-binding region (H-T-H motif); the sequence is IADIAKIAGVSKSTVSRYLN.

Negative regulator of scrB expression. In Staphylococcus xylosus, this protein is Sucrose operon repressor (scrR).